Here is a 291-residue protein sequence, read N- to C-terminus: Phycobilisome 32.1 kDa linker polypeptide, phycocyanin-associated, rod 1 (291 aa).

The region spanning 2 to 179 is the PBS-linker domain; it reads AITTAASRLG…LYRGYANSDR (178 aa). The 53-residue stretch at 236–288 folds into the CpcD-like domain; the sequence is SKLFRVEITAISAPGYPKVRRSNKAVIVPFEQLNQTLQQINRLGGKVASITPA.

This sequence belongs to the phycobilisome linker protein family. Part of 2 PBS rod complexes, the conventional CpcG-PBS rod and a photosystem I-specific CpcL-PBS rod, both of which include ferredoxin--NADP reductase (petH). CpcG-PBS has on average 3 stacked phycocyanin hexamers (PC, CpcA and CpcB). Linker CpcG connects the PC stack to the thylakoid, the hexamers are linked by 1 copy of CpcC1, 1 copy of CpcC2 and the stack is terminated by a single copy of CpcD. The CpcL-PBS has on average 5 stacked phycocyanin hexamers (PC, CpcA and CpcB). Linker CpcL connects the PC stack to the thylakoid, the hexamers are linked by 1 copy of CpcC1, 3 copies of CpcC2 and the stack is terminated by a single copy of CpcD.

It localises to the cellular thylakoid membrane. Rod linker protein, connecting hexameric phycocyanin (PC, made by cpcA and cpcB) rods in the phycobilisome (PBS). PC is the major phycobiliprotein in PBS rods. Linker polypeptides determine the state of aggregation and the location of the disk-shaped phycobiliprotein units within the phycobilisome and modulate their spectroscopic properties in order to mediate a directed and optimal energy transfer. In Synechocystis sp. (strain ATCC 27184 / PCC 6803 / Kazusa), this protein is Phycobilisome 32.1 kDa linker polypeptide, phycocyanin-associated, rod 1 (cpcC1).